The primary structure comprises 265 residues: tRNA pseudouridine synthase A (265 aa).

The active-site Nucleophile is Asp58. Tyr116 lines the substrate pocket.

The protein belongs to the tRNA pseudouridine synthase TruA family. As to quaternary structure, homodimer.

It carries out the reaction uridine(38/39/40) in tRNA = pseudouridine(38/39/40) in tRNA. In terms of biological role, formation of pseudouridine at positions 38, 39 and 40 in the anticodon stem and loop of transfer RNAs. The protein is tRNA pseudouridine synthase A of Neisseria gonorrhoeae (strain ATCC 700825 / FA 1090).